Consider the following 577-residue polypeptide: Dihydroxy-acid dehydratase (577 aa).

A compositionally biased stretch (basic and acidic residues) spans 1–10; the sequence is MLKRSFDKSK. The tract at residues 1–22 is disordered; the sequence is MLKRSFDKSKLPSRHVTEGPSR. C56 contacts [2Fe-2S] cluster. D88 contributes to the Mg(2+) binding site. C129 is a [2Fe-2S] cluster binding site. Mg(2+)-binding residues include D130 and K131. The residue at position 131 (K131) is an N6-carboxylysine. C201 is a [2Fe-2S] cluster binding site. E453 provides a ligand contact to Mg(2+). S479 (proton acceptor) is an active-site residue.

This sequence belongs to the IlvD/Edd family. In terms of assembly, homodimer. The cofactor is [2Fe-2S] cluster. Mg(2+) serves as cofactor.

It carries out the reaction (2R)-2,3-dihydroxy-3-methylbutanoate = 3-methyl-2-oxobutanoate + H2O. It catalyses the reaction (2R,3R)-2,3-dihydroxy-3-methylpentanoate = (S)-3-methyl-2-oxopentanoate + H2O. The protein operates within amino-acid biosynthesis; L-isoleucine biosynthesis; L-isoleucine from 2-oxobutanoate: step 3/4. Its pathway is amino-acid biosynthesis; L-valine biosynthesis; L-valine from pyruvate: step 3/4. Functions in the biosynthesis of branched-chain amino acids. Catalyzes the dehydration of (2R,3R)-2,3-dihydroxy-3-methylpentanoate (2,3-dihydroxy-3-methylvalerate) into 2-oxo-3-methylpentanoate (2-oxo-3-methylvalerate) and of (2R)-2,3-dihydroxy-3-methylbutanoate (2,3-dihydroxyisovalerate) into 2-oxo-3-methylbutanoate (2-oxoisovalerate), the penultimate precursor to L-isoleucine and L-valine, respectively. The polypeptide is Dihydroxy-acid dehydratase (Dinoroseobacter shibae (strain DSM 16493 / NCIMB 14021 / DFL 12)).